The sequence spans 933 residues: 2-oxoglutarate dehydrogenase E1 component (933 aa).

The protein belongs to the alpha-ketoglutarate dehydrogenase family. As to quaternary structure, homodimer. Part of the 2-oxoglutarate dehydrogenase (OGDH) complex composed of E1 (2-oxoglutarate dehydrogenase), E2 (dihydrolipoamide succinyltransferase) and E3 (dihydrolipoamide dehydrogenase); the complex contains multiple copies of the three enzymatic components (E1, E2 and E3). Interacts (via N-terminus) with SucB, the E2 component of OGDH complex. Thiamine diphosphate serves as cofactor.

The enzyme catalyses N(6)-[(R)-lipoyl]-L-lysyl-[protein] + 2-oxoglutarate + H(+) = N(6)-[(R)-S(8)-succinyldihydrolipoyl]-L-lysyl-[protein] + CO2. E1 component of the 2-oxoglutarate dehydrogenase (OGDH) complex which catalyzes the decarboxylation of 2-oxoglutarate, the first step in the conversion of 2-oxoglutarate to succinyl-CoA and CO(2). In Escherichia coli O157:H7, this protein is 2-oxoglutarate dehydrogenase E1 component (sucA).